Consider the following 108-residue polypeptide: Replication restart protein PriB (108 aa).

The SSB domain occupies 8-108 (VDNRFSLIGK…LHAEQIEFIE (101 aa)).

Belongs to the PriB family. Homodimer. Interacts with PriA and DnaT. Component of the replication restart primosome. Primosome assembly occurs via a 'hand-off' mechanism. PriA binds to replication forks, subsequently PriB then DnaT bind; DnaT then displaces ssDNA to generate the helicase loading substrate.

Its function is as follows. Involved in the restart of stalled replication forks, which reloads the replicative helicase on sites other than the origin of replication; the PriA-PriB pathway is the major replication restart pathway. During primosome assembly it facilitates complex formation between PriA and DnaT on DNA; stabilizes PriA on DNA. Stimulates the DNA unwinding activity of PriA helicase. The polypeptide is Replication restart protein PriB (Histophilus somni (strain 129Pt) (Haemophilus somnus)).